The chain runs to 509 residues: Ribonuclease Y (509 aa).

The helical transmembrane segment at Ile5–Leu25 threads the bilayer. Positions Leu199 to Asp265 constitute a KH domain. The HD domain maps to Ala325–Ala418.

This sequence belongs to the RNase Y family.

The protein localises to the cell membrane. Endoribonuclease that initiates mRNA decay. In Sulfurovum sp. (strain NBC37-1), this protein is Ribonuclease Y.